We begin with the raw amino-acid sequence, 306 residues long: Curved DNA-binding protein (306 aa).

A J domain is found at 5-69 (DYYAIMGVKP…QRRAEYDQMW (65 aa)).

The protein resides in the cytoplasm. It is found in the nucleoid. DNA-binding protein that preferentially recognizes a curved DNA sequence. It is probably a functional analog of DnaJ; displays overlapping activities with DnaJ, but functions under different conditions, probably acting as a molecular chaperone in an adaptive response to environmental stresses other than heat shock. Lacks autonomous chaperone activity; binds native substrates and targets them for recognition by DnaK. Its activity is inhibited by the binding of CbpM. The sequence is that of Curved DNA-binding protein from Escherichia fergusonii (strain ATCC 35469 / DSM 13698 / CCUG 18766 / IAM 14443 / JCM 21226 / LMG 7866 / NBRC 102419 / NCTC 12128 / CDC 0568-73).